We begin with the raw amino-acid sequence, 141 residues long: Secreted RxLR effector protein 69 (141 aa).

The first 19 residues, 1-19 (MHSSTILFVLGAAILAVNG), serve as a signal peptide directing secretion. The short motif at 38–53 (RLLRSNLMKHETGEER) is the RxLR-dEER element. Residue Asn-120 is glycosylated (N-linked (GlcNAc...) asparagine).

The protein belongs to the RxLR effector family.

The protein localises to the secreted. The protein resides in the host nucleus. Functionally, secreted effector that completely suppresses the host cell death induced by cell death-inducing proteins. This Plasmopara viticola (Downy mildew of grapevine) protein is Secreted RxLR effector protein 69.